Consider the following 124-residue polypeptide: Large ribosomal subunit protein eL22y (124 aa).

The protein belongs to the eukaryotic ribosomal protein eL22 family.

This is Large ribosomal subunit protein eL22y (RPL22C) from Arabidopsis thaliana (Mouse-ear cress).